A 509-amino-acid polypeptide reads, in one-letter code: Surface lipoprotein assembly modifier (509 aa).

The N-terminal stretch at 1 to 32 (MNLMINLKPLTFLPFFGRLVFLSGVIYNTAWA) is a signal peptide. Residues 33–204 (NTVIPVDNSR…SYIDTINQRD (172 aa)) form an N-terminal domain region. The disordered stretch occupies residues 43–72 (PDETFSQTSPKQHLFSQKPKPTEPTSSASS). The span at 46–57 (TFSQTSPKQHLF) shows a compositional bias: polar residues. One copy of the TPR repeat lies at 120–153 (FLLKWAQAVVARKQGKLNESVRLYRQIIAEKPNL). The interval 205 to 509 (SWNVYGGVNY…RIYLTFSKTF (305 aa)) is C-terminal probable beta barrel. 14 consecutive transmembrane segments (beta stranded) span residues 206–216 (WNVYGGVNYLH), 245–256 (LSYFINLSKNWS), 261–270 (FFTEFSADIN), 284–294 (STRLNLGGGYR), 298–308 (TEVKLMPFVEQ), 331–341 (SGINLDVDYWL), 345–355 (WKISTVLEYTE), 371–381 (YSISNTLIYMP), 386–395 (FWFVGLDYYQ), 408–417 (QGIRLGWGQE), 423–432 (STRLQTSYAT), 461–470 (GVNFTIWHRS), 476–485 (ITPKITWAYQ), and 499–509 (NRIYLTFSKTF).

This sequence belongs to the Slam family.

Its subcellular location is the cell outer membrane. Required for correct export to the cell surface of some cell outer membrane lipoproteins (tested with PM1514) upon heterologous expression in E.coli and probably also in Pasteurella. The polypeptide is Surface lipoprotein assembly modifier (Pasteurella multocida (strain Pm70)).